Consider the following 105-residue polypeptide: MRGMGNMNNMMKQMQKMQKDMAKAQEELKELSVEGTAGGGMVKVVVSGHKEVLDVIIAEDVVDPDDVDMLQDLVLAAINDAMKQADQLVNDKMGRFTQGMNLPGF.

A compositionally biased stretch (low complexity) spans 1–16 (MRGMGNMNNMMKQMQK). The tract at residues 1 to 26 (MRGMGNMNNMMKQMQKMQKDMAKAQE) is disordered. Residues 17–26 (MQKDMAKAQE) show a composition bias toward basic and acidic residues.

The protein belongs to the YbaB/EbfC family. In terms of assembly, homodimer.

It is found in the cytoplasm. Its subcellular location is the nucleoid. In terms of biological role, binds to DNA and alters its conformation. May be involved in regulation of gene expression, nucleoid organization and DNA protection. In Exiguobacterium sp. (strain ATCC BAA-1283 / AT1b), this protein is Nucleoid-associated protein EAT1b_1710.